Here is a 334-residue protein sequence, read N- to C-terminus: Histo-blood group ABO system transferase 2 (334 aa).

Residues 1–15 (MKDLRFGRLKCYSLH) lie on the Cytoplasmic side of the membrane. Residues 16-36 (LGILPLTVLVLVFFCFVCLSL) form a helical; Signal-anchor for type II membrane protein membrane-spanning segment. Topologically, residues 37-334 (RSQEWGHPGA…VPKNHQAIRN (298 aa)) are lumenal. Asparagine 94 carries an N-linked (GlcNAc...) asparagine glycan. Residues 102–104 (FAV), tyrosine 107, and 192–194 (DVD) contribute to the UDP-N-acetyl-alpha-D-galactosamine site. Mn(2+) contacts are provided by aspartate 192 and aspartate 194. Residues histidine 214, threonine 226, glutamate 284, and aspartate 307 each coordinate an alpha-L-fucosyl-(1-&gt;2)-beta-D-galactosyl derivative. Catalysis depends on glutamate 284, which acts as the Nucleophile.

Belongs to the glycosyltransferase 6 family. Mn(2+) serves as cofactor. Large intestine, caecum, stomach, pancreas, submaxillary gland and kidney (at protein level). Ubiquitous.

Its subcellular location is the golgi apparatus. It is found in the golgi stack membrane. The protein localises to the secreted. It catalyses the reaction an alpha-L-fucosyl-(1-&gt;2)-beta-D-galactosyl derivative + UDP-N-acetyl-alpha-D-galactosamine = an N-acetyl-alpha-D-galactosaminyl-(1-&gt;3)-[alpha-L-fucosyl-(1-&gt;2)]-beta-D-galactosyl derivative + UDP + H(+). The enzyme catalyses an alpha-L-fucosyl-(1-&gt;2)-beta-D-galactosyl derivative + UDP-alpha-D-galactose = an alpha-D-galactosyl-(1-&gt;3)-[alpha-L-fucosyl-(1-&gt;2)]-beta-D-galactosyl derivative + UDP + H(+). It functions in the pathway protein modification; protein glycosylation. Functionally, possesses strong B transferase activity and weak A transferase activity. This is Histo-blood group ABO system transferase 2 (Abo2) from Rattus norvegicus (Rat).